Here is a 127-residue protein sequence, read N- to C-terminus: UPF0325 protein ASA_3165 (127 aa).

The protein belongs to the UPF0325 family.

The polypeptide is UPF0325 protein ASA_3165 (Aeromonas salmonicida (strain A449)).